The following is a 147-amino-acid chain: Interleukin-4 (147 aa).

Residues 1–19 (MGLRPQLAAILLCLLACTG) form the signal peptide. N-linked (GlcNAc...) asparagine glycosylation is found at Asn20, Asn61, Asn90, and Asn117. 2 cysteine pairs are disulfide-bonded: Cys47/Cys87 and Cys69/Cys114.

Belongs to the IL-4/IL-13 family.

It is found in the secreted. Functionally, participates in at least several B-cell activation processes as well as of other cell types. It is a costimulator of DNA-synthesis. It induces the expression of class II MHC molecules on resting B-cells. It enhances both secretion and cell surface expression of IgE and IgG1. It also regulates the expression of the low affinity Fc receptor for IgE (CD23) on both lymphocytes and monocytes. Positively regulates IL31RA expression in macrophages. Stimulates autophagy in dendritic cells by interfering with mTORC1 signaling and through the induction of RUFY4. This is Interleukin-4 (IL4) from Mesocricetus auratus (Golden hamster).